A 366-amino-acid polypeptide reads, in one-letter code: Pectinesterase A (366 aa).

An N-terminal signal peptide occupies residues 1-24 (MLKTISGTLALSLIIAASVHQAQA). Substrate contacts are provided by Thr109 and Gln153. The active-site Proton donor is Asp178. A disulfide bridge links Cys192 with Cys212. Asp199 acts as the Nucleophile in catalysis. Substrate is bound by residues Arg219, Asn226, Tyr230, Arg267, Trp269, and Thr272.

The protein belongs to the pectinesterase family. Monomer.

It localises to the secreted. The catalysed reaction is [(1-&gt;4)-alpha-D-galacturonosyl methyl ester](n) + n H2O = [(1-&gt;4)-alpha-D-galacturonosyl](n) + n methanol + n H(+). It participates in glycan metabolism; pectin degradation; 2-dehydro-3-deoxy-D-gluconate from pectin: step 1/5. Its function is as follows. Catalyzes the first step in maceration and soft-rotting of plant tissue. In Dickeya dadantii (strain 3937) (Erwinia chrysanthemi (strain 3937)), this protein is Pectinesterase A.